We begin with the raw amino-acid sequence, 282 residues long: Formate channel FocB (282 aa).

Topologically, residues 1-35 (MRNKLSFDLQLSARKAAIAERIAAHKIARSKVSVF) are cytoplasmic. Residues 36-56 (LMAMSAGVFMAIGFTFYLSVI) form a helical membrane-spanning segment. Topologically, residues 57–68 (ADAPSSQALTHL) are periplasmic. Residues 69-89 (VGGLCFTLGFILLAVCGTSLF) form a helical membrane-spanning segment. Topologically, residues 90-112 (TSSVMTVMAKSRGVISWRTWLIN) are cytoplasmic. A helical transmembrane segment spans residues 113–133 (ALLVACGNLAGIACFSLLIWF). The Periplasmic segment spans residues 134 to 163 (SGLVMSENAMWGVAVLHCAEGKMHHTFTES). A helical membrane pass occupies residues 164 to 184 (VSLGIMCNLMVCLALWMSYCG). The Cytoplasmic segment spans residues 185-190 (RSLCDK). Residues 191–211 (IVAMILPITLFVASGFEHCIA) form a helical membrane-spanning segment. At 212–248 (NLFVIPFAIAIRHFAPPPFWQLAHSSADNFPALTVSH) the chain is on the periplasmic side. A helical transmembrane segment spans residues 249-269 (FITANLLPVMLGNIIGGAVLV). The Cytoplasmic segment spans residues 270–282 (SMCYRAIYLRQEP).

The protein belongs to the FNT transporter (TC 1.A.16) family.

The protein localises to the cell inner membrane. It carries out the reaction formate(in) = formate(out). The direction of formate translocation depends on external pH and electron donor source. Functionally, involved in the bidirectional transport of formate during mixed-acid fermentation. In Escherichia coli (strain K12), this protein is Formate channel FocB.